The chain runs to 366 residues: Probable S-adenosyl-L-methionine-binding protein AF_0433 (366 aa).

A TsaA-like domain is found at 6 to 136 (LRQVGVIRSP…YSSTIDSVGN (131 aa)). Residues 23–25 (PHQ), 61–62 (DR), Arg85, and 116–119 (LDGT) each bind S-adenosyl-L-methionine.

This sequence belongs to the tRNA methyltransferase O family.

The polypeptide is Probable S-adenosyl-L-methionine-binding protein AF_0433 (Archaeoglobus fulgidus (strain ATCC 49558 / DSM 4304 / JCM 9628 / NBRC 100126 / VC-16)).